The sequence spans 92 residues: Trp operon repressor homolog (92 aa).

The DNA-binding element occupies 56-79 (QREVASKLGVSITKITRGAANLQD).

Belongs to the TrpR family. In terms of assembly, homodimer.

Its subcellular location is the cytoplasm. Its function is as follows. This protein is an aporepressor. When complexed with L-tryptophan it binds the operator region of the trp operon and prevents the initiation of transcription. This Xylella fastidiosa (strain M23) protein is Trp operon repressor homolog.